The sequence spans 462 residues: SET domain-containing protein SmydA-8, isoform A (462 aa).

The SET domain occupies P55–T287.

It belongs to the class V-like SAM-binding methyltransferase superfamily.

In Drosophila melanogaster (Fruit fly), this protein is SET domain-containing protein SmydA-8, isoform A.